The sequence spans 219 residues: Small ribosomal subunit protein eS1 (219 aa).

The protein belongs to the eukaryotic ribosomal protein eS1 family. In terms of assembly, component of the small ribosomal subunit. Mature ribosomes consist of a small (40S) and a large (60S) subunit. The 40S subunit contains about 33 different proteins and 1 molecule of RNA (18S). The 60S subunit contains about 49 different proteins and 3 molecules of RNA (25S, 5.8S and 5S).

Its subcellular location is the cytoplasm. This is Small ribosomal subunit protein eS1 from Guillardia theta (Cryptophyte).